The sequence spans 145 residues: Hemoglobin subunit beta-3 (145 aa).

Residues 1–145 (MLTAEEKAAV…VANALAHRYH (145 aa)) enclose the Globin domain. Residue Thr11 is modified to Phosphothreonine. An N6-acetyllysine modification is found at Lys58. Residue His62 participates in heme b binding. Position 81 is an N6-acetyllysine (Lys81). Residue His91 participates in heme b binding. Cys92 bears the S-nitrosocysteine mark.

The protein belongs to the globin family. Heterotetramer of two alpha chains and two beta chains. In terms of tissue distribution, red blood cells.

Functionally, involved in oxygen transport from the lung to the various peripheral tissues. This chain is Hemoglobin subunit beta-3 (HBB), found in Odocoileus virginianus virginianus (Virginia white-tailed deer).